The chain runs to 340 residues: Entry-fusion complex protein OPG094 (340 aa).

Residues 1–20 (MGGGVSVELPKRDPPPGVPT) are disordered. A lipid anchor (N-myristoyl glycine; by host) is attached at Gly2. The Virion surface portion of the chain corresponds to 2–319 (GGGVSVELPK…VQHNIKHSFD (318 aa)). The chain crosses the membrane as a helical; Signal-anchor for type II membrane protein span at residues 320–340 (LKLHLISLLSLLVIWILIVAI).

The protein belongs to the orthopoxvirus OPG086 family. In terms of assembly, interacts with OPG143. Component of the entry fusion complex (EFC) composed of OPG053, OPG076, OPG086, OPG094, OPG095, OPG099, OPG107, OPG143, OPG104, OPG147 and OPG155. Except for OPG095 and OPG053, each of the EFC proteins is required for assembly or stability of the complex. In terms of processing, unglycosylated because produced in viral factories instead of the classic ER -Golgi route.

It localises to the virion membrane. Its function is as follows. Component of the entry fusion complex (EFC), which consists of 11 proteins. During cell infection, this complex mediates entry of the virion core into the host cytoplasm by a two-step mechanism consisting of lipid mixing of the viral and cellular membranes and subsequent pore formation. In Variola virus, this protein is Entry-fusion complex protein OPG094 (OPG094).